The chain runs to 475 residues: Cytochrome P450 monooxygenase sthD (475 aa).

Positions 1–17 (MAAYFLLGLYGSTLVYR) are cleaved as a signal peptide. Residues 276 to 296 (FIIIAGSDTVAATLTFAFFYL) form a helical membrane-spanning segment. Asn-336 carries an N-linked (GlcNAc...) asparagine glycan. Residue Cys-418 participates in heme binding.

Belongs to the cytochrome P450 family. The cofactor is heme.

It is found in the membrane. The catalysed reaction is betaenone A + NADPH + O2 + H(+) = stemphyloxin II + NADP(+) + H2O. It carries out the reaction betaenone C + NADPH + O2 + H(+) = stemphyloxin I + NADP(+) + H2O. The protein operates within mycotoxin biosynthesis. Functionally, cytochrome P450 monooxygenase; part of the gene cluster that mediates the biosynthesis of the phytotoxin stemphyloxin II. The first step of the pathway is the synthesis of dehydroprobetaenone I by the polyketide synthase sthA and the enoyl reductase sthE via condensation of one acetyl-CoA starter unit with 7 malonyl-CoA units and 5 methylations. The C-terminal reductase (R) domain of sthA catalyzes the reductive release of the polyketide chain. Because sthA lacks a designated enoylreductase (ER) domain, the required activity is provided the enoyl reductase sthE. The short-chain dehydrogenase/reductase sthC then catalyzes reduction of dehydroprobetaenone I to probetaenone I. The cytochrome P450 monooxygenase sthF catalyzes successive epoxidation, oxidation (resulting from epoxide opening) and hydroxylation to install a tertiary alcohol in the decaline ring to yield betaenone C from dehydroprobetaenone I and betaenone B from probetaenone I. The FAD-linked oxidoreductase sthB is responsible for the conversion of betaenone C to betaenone A via an intramolecular aldol reaction between C-1 and C-17 to form the bridged tricyclic system in betaenone A. Finally, the cytochrome P450 monooxygenase sthD catalyzes the hydroxylation of C-15 to afford the final metabolite stemphyloxin II. The chain is Cytochrome P450 monooxygenase sthD from Phaeosphaeria nodorum (strain SN15 / ATCC MYA-4574 / FGSC 10173) (Glume blotch fungus).